Here is a 250-residue protein sequence, read N- to C-terminus: Triosephosphate isomerase (250 aa).

Substrate is bound at residue 9 to 11 (NWK). Histidine 95 serves as the catalytic Electrophile. The Proton acceptor role is filled by glutamate 167. Substrate is bound by residues glycine 173, serine 212, and 233-234 (GG).

This sequence belongs to the triosephosphate isomerase family. In terms of assembly, homodimer.

The protein localises to the cytoplasm. The enzyme catalyses D-glyceraldehyde 3-phosphate = dihydroxyacetone phosphate. It functions in the pathway carbohydrate biosynthesis; gluconeogenesis. The protein operates within carbohydrate degradation; glycolysis; D-glyceraldehyde 3-phosphate from glycerone phosphate: step 1/1. In terms of biological role, involved in the gluconeogenesis. Catalyzes stereospecifically the conversion of dihydroxyacetone phosphate (DHAP) to D-glyceraldehyde-3-phosphate (G3P). The sequence is that of Triosephosphate isomerase from Nitrosococcus oceani (strain ATCC 19707 / BCRC 17464 / JCM 30415 / NCIMB 11848 / C-107).